We begin with the raw amino-acid sequence, 155 residues long: Ribosomal RNA large subunit methyltransferase H (155 aa).

S-adenosyl-L-methionine-binding positions include Leu-73, Gly-104, and Ile-123 to Phe-128.

Belongs to the RNA methyltransferase RlmH family. In terms of assembly, homodimer.

It localises to the cytoplasm. It catalyses the reaction pseudouridine(1915) in 23S rRNA + S-adenosyl-L-methionine = N(3)-methylpseudouridine(1915) in 23S rRNA + S-adenosyl-L-homocysteine + H(+). Functionally, specifically methylates the pseudouridine at position 1915 (m3Psi1915) in 23S rRNA. This Francisella philomiragia subsp. philomiragia (strain ATCC 25017 / CCUG 19701 / FSC 153 / O#319-036) protein is Ribosomal RNA large subunit methyltransferase H.